A 237-amino-acid chain; its full sequence is Uridylate kinase (237 aa).

Residue 12 to 15 (KLSG) coordinates ATP. The tract at residues 20 to 25 (GDEGFG) is involved in allosteric activation by GTP. UMP is bound at residue Gly-54. ATP contacts are provided by Gly-55 and Arg-59. UMP-binding positions include Asp-74 and 135–142 (TGSPFFTT). 3 residues coordinate ATP: Thr-162, Tyr-168, and Asp-171.

The protein belongs to the UMP kinase family. In terms of assembly, homohexamer.

Its subcellular location is the cytoplasm. The enzyme catalyses UMP + ATP = UDP + ADP. It participates in pyrimidine metabolism; CTP biosynthesis via de novo pathway; UDP from UMP (UMPK route): step 1/1. Its activity is regulated as follows. Allosterically activated by GTP. Inhibited by UTP. In terms of biological role, catalyzes the reversible phosphorylation of UMP to UDP. The protein is Uridylate kinase of Mannheimia succiniciproducens (strain KCTC 0769BP / MBEL55E).